We begin with the raw amino-acid sequence, 300 residues long: MANLYDLKKFDLNLLVIFECIYQHLSISKAAESLYITPSAVSQSLQRLRAQFNDPLFIRSGKGIAPTTTGLNLHHHLEKNLRGLEQTINIVNKSELKKNFIIYGPQLISCSNNSMLIRCLRQDSSVEIECHDILMSAENAEELLVHRKADLVITQMPVISRSVICMPLHTIRNTLICSNRHPRITDNSTYEQIMAEEFTQLISKSAGVDDIQMEIDERFMNRKISFRGSSLLTIINSIAVTDLLGIVPYELYNSYRDFLNLKEIKLEHPLPSIKLYISYNKSSLNNLVFSRFIDRLNESF.

In terms of domain architecture, HTH lysR-type spans 10–67 (FDLNLLVIFECIYQHLSISKAAESLYITPSAVSQSLQRLRAQFNDPLFIRSGKGIAPT). The H-T-H motif DNA-binding region spans 27 to 46 (ISKAAESLYITPSAVSQSLQ).

It belongs to the LysR transcriptional regulatory family.

This is an uncharacterized protein from Escherichia coli (strain K12).